We begin with the raw amino-acid sequence, 84 residues long: Small ribosomal subunit protein bS16 (84 aa).

Belongs to the bacterial ribosomal protein bS16 family.

The protein is Small ribosomal subunit protein bS16 of Delftia acidovorans (strain DSM 14801 / SPH-1).